The following is a 521-amino-acid chain: Cytokinin dehydrogenase 9 (521 aa).

An N-terminal signal peptide occupies residues Met-1–Thr-22. Asn-57 is a glycosylation site (N-linked (GlcNAc...) asparagine). Residues Ser-59 to Ala-237 form the FAD-binding PCMH-type domain. Positions 95, 97, and 99 each coordinate FAD. At His-100 the chain carries Pros-8alpha-FAD histidine. Positions 101, 105, 161, 166, 172, 176, and 227 each coordinate FAD. Residues Asn-278, Asn-412, and Asn-418 are each glycosylated (N-linked (GlcNAc...) asparagine). Position 469 (Tyr-469) interacts with FAD. Residue Asn-472 is glycosylated (N-linked (GlcNAc...) asparagine). FAD is bound at residue Gln-507.

It belongs to the oxygen-dependent FAD-linked oxidoreductase family. Monomer. It depends on FAD as a cofactor. In terms of tissue distribution, expressed in inflorescence meristems.

The protein resides in the secreted. It localises to the extracellular space. It is found in the cytoplasm. The protein localises to the cytosol. Its subcellular location is the nucleus. The catalysed reaction is N(6)-dimethylallyladenine + A + H2O = 3-methyl-2-butenal + adenine + AH2. Its function is as follows. Catalyzes the oxidation of cytokinins, a family of N(6)-substituted adenine derivatives that are plant hormones, where the substituent is an isopentenyl group. Possesses cytokinin oxidase activity toward trans-zeatin (tZ) and N6-(2-isopentenyl)adenine (2iP) in vitro. Functions as a primary strigolactone-responsive gene to regulate rice tillering, plant height, and panicle size, likely via a secondary response gene, RR5, which encodes a cytokinin-inducible rice type-A response regulator that seems to act as negative regulator of the cytokinin signaling. The chain is Cytokinin dehydrogenase 9 from Oryza sativa subsp. japonica (Rice).